The sequence spans 271 residues: Formamidopyrimidine-DNA glycosylase (271 aa).

Pro-2 (schiff-base intermediate with DNA) is an active-site residue. Glu-3 acts as the Proton donor in catalysis. The active-site Proton donor; for beta-elimination activity is the Lys-57. DNA-binding residues include His-90, Arg-109, and Lys-151. The FPG-type zinc-finger motif lies at 236-270; the sequence is HVYGRGGETCTQCGNLLSEIKLGQRATVFCGLCQP. The Proton donor; for delta-elimination activity role is filled by Arg-260.

Belongs to the FPG family. In terms of assembly, monomer. Requires Zn(2+) as cofactor.

The enzyme catalyses Hydrolysis of DNA containing ring-opened 7-methylguanine residues, releasing 2,6-diamino-4-hydroxy-5-(N-methyl)formamidopyrimidine.. It catalyses the reaction 2'-deoxyribonucleotide-(2'-deoxyribose 5'-phosphate)-2'-deoxyribonucleotide-DNA = a 3'-end 2'-deoxyribonucleotide-(2,3-dehydro-2,3-deoxyribose 5'-phosphate)-DNA + a 5'-end 5'-phospho-2'-deoxyribonucleoside-DNA + H(+). Involved in base excision repair of DNA damaged by oxidation or by mutagenic agents. Acts as a DNA glycosylase that recognizes and removes damaged bases. Has a preference for oxidized purines, such as 7,8-dihydro-8-oxoguanine (8-oxoG). Has AP (apurinic/apyrimidinic) lyase activity and introduces nicks in the DNA strand. Cleaves the DNA backbone by beta-delta elimination to generate a single-strand break at the site of the removed base with both 3'- and 5'-phosphates. The sequence is that of Formamidopyrimidine-DNA glycosylase from Shewanella loihica (strain ATCC BAA-1088 / PV-4).